The primary structure comprises 201 residues: NADH-quinone oxidoreductase subunit C (201 aa).

Belongs to the complex I 30 kDa subunit family. In terms of assembly, NDH-1 is composed of 14 different subunits. Subunits NuoB, C, D, E, F, and G constitute the peripheral sector of the complex.

It is found in the cell inner membrane. The catalysed reaction is a quinone + NADH + 5 H(+)(in) = a quinol + NAD(+) + 4 H(+)(out). Functionally, NDH-1 shuttles electrons from NADH, via FMN and iron-sulfur (Fe-S) centers, to quinones in the respiratory chain. The immediate electron acceptor for the enzyme in this species is believed to be ubiquinone. Couples the redox reaction to proton translocation (for every two electrons transferred, four hydrogen ions are translocated across the cytoplasmic membrane), and thus conserves the redox energy in a proton gradient. The sequence is that of NADH-quinone oxidoreductase subunit C from Aromatoleum aromaticum (strain DSM 19018 / LMG 30748 / EbN1) (Azoarcus sp. (strain EbN1)).